The chain runs to 447 residues: Cysteine--tRNA ligase (447 aa).

Position 28 (C28) interacts with Zn(2+). Residues 30 to 40 (PTVYNYIHIGN) carry the 'HIGH' region motif. Positions 211, 236, and 240 each coordinate Zn(2+). Positions 268–272 (KMSKS) match the 'KMSKS' region motif. ATP is bound at residue K271.

The protein belongs to the class-I aminoacyl-tRNA synthetase family. In terms of assembly, monomer. Requires Zn(2+) as cofactor.

The protein resides in the cytoplasm. The enzyme catalyses tRNA(Cys) + L-cysteine + ATP = L-cysteinyl-tRNA(Cys) + AMP + diphosphate. The sequence is that of Cysteine--tRNA ligase from Streptococcus pyogenes serotype M28 (strain MGAS6180).